The primary structure comprises 259 residues: Ras-related protein Rab-34 (259 aa).

Met1 bears the N-acetylmethionine mark. The GTP site is built by Ser62, Val63, Gly64, Lys65, Thr66, Asp78, Tyr81, and Thr84. A Mg(2+)-binding site is contributed by Thr66. The short motif at 71-89 (RFCKDTFDKNYKATIGVDF) is the Switch 1 element. The Mg(2+) site is built by Thr84 and Asp107. The short motif at 108-127 (TAGQERFKCIASTYYRGAQA) is the Switch 2 element. GTP contacts are provided by Gly110, Lys167, Asp169, and Ser198. Ser241 and Ser244 each carry phosphoserine. 2 S-geranylgeranyl cysteine lipidation sites follow: Cys257 and Cys258.

Belongs to the small GTPase superfamily. Rab family. In terms of assembly, interacts with RILP. The GTP-bound form interacts with REP15. It depends on Mg(2+) as a cofactor.

The protein localises to the cytoplasm. It localises to the golgi apparatus. The protein resides in the cytoplasmic vesicle. It is found in the phagosome. Its subcellular location is the phagosome membrane. The protein localises to the cell projection. It localises to the cilium. The protein resides in the cytoskeleton. It is found in the microtubule organizing center. Its subcellular location is the centrosome. The protein localises to the centriole. The enzyme catalyses GTP + H2O = GDP + phosphate + H(+). With respect to regulation, regulated by guanine nucleotide exchange factors (GEFs) which promote the exchange of bound GDP for free GTP. Regulated by GTPase activating proteins (GAPs) which increase the GTP hydrolysis activity. Inhibited by GDP dissociation inhibitors (GDIs). The small GTPases Rab are key regulators of intracellular membrane trafficking, from the formation of transport vesicles to their fusion with membranes. Rabs cycle between an inactive GDP-bound form and an active GTP-bound form that is able to recruit to membranes different sets of downstream effectors directly responsible for vesicle formation, movement, tethering and fusion. RAB34 transports protein involved in the redistribution of lysosomes to the peri-Golgi region. Plays a role in the maturation of phagosomes that engulf pathogens, such as S.aureus and M.tuberculosis. Plays a role in the fusion of phagosomes with lysosomes. Required for the early steps of intracellular ciliogenesis, the cilium assembly pathway initiated by trafficking and docking of ciliary vesicles to the centrioles in the cytoplasm, followed by axoneme formation in the cytoplasm. After axoneme elongation, the centrioles migrate close to the cell surface so that ciliary vesicles can fuse with the plasma membrane to expose cilia to the extracellular space. It seems dispensable for ciliogenesis via the extracellular pathway where cilium assembly begins after migration and docking of the centriole to the plasma membrane. Also acts as a positive regulator of hedgehog signaling and regulates ciliary function. In Sus scrofa (Pig), this protein is Ras-related protein Rab-34 (RAB34).